Consider the following 459-residue polypeptide: FBD-associated F-box protein At5g27750 (459 aa).

Residues 4 to 50 (FDRISELPESLITQILLCLPTKDSVKTSVLSTRWKNLWLNVPGLDLT) form the F-box domain. One can recognise an FBD domain in the interval 374–426 (TEELNLINVPRCIVSTLECVEIKGLFEWEEEEMKIARYFLENAAVLKKLTMSF).

The sequence is that of FBD-associated F-box protein At5g27750 from Arabidopsis thaliana (Mouse-ear cress).